Consider the following 261-residue polypeptide: Carnitinyl-CoA dehydratase (261 aa).

The Nucleophile role is filled by Glu111. The active-site Proton acceptor is the Glu131.

It belongs to the enoyl-CoA hydratase/isomerase family.

The enzyme catalyses (R)-carnitinyl-CoA = crotonobetainyl-CoA + H2O. The protein operates within amine and polyamine metabolism; carnitine metabolism. In terms of biological role, catalyzes the reversible dehydration of L-carnitinyl-CoA to crotonobetainyl-CoA. This Proteus mirabilis (strain HI4320) protein is Carnitinyl-CoA dehydratase.